We begin with the raw amino-acid sequence, 360 residues long: Mitogen-activated protein kinase 14 (360 aa).

Serine 2 carries the post-translational modification N-acetylserine. At serine 2 the chain carries Phosphoserine. Threonine 16 is modified (phosphothreonine). Residues 24 to 308 (YQNLSPVGSG…AAQALAHAYF (285 aa)) form the Protein kinase domain. ATP contacts are provided by residues 30 to 38 (VGSGAYGSV) and lysine 53. Residue lysine 53 is modified to N6-acetyllysine. Aspartate 150 (proton acceptor) is an active-site residue. At lysine 152 the chain carries N6-acetyllysine. The residue at position 180 (threonine 180) is a Phosphothreonine. The TXY signature appears at 180 to 182 (TGY). Phosphotyrosine is present on tyrosine 182. Tyrosine 323 bears the Phosphotyrosine; by ZAP70 mark.

The protein belongs to the protein kinase superfamily. CMGC Ser/Thr protein kinase family. MAP kinase subfamily. Component of a signaling complex containing at least AKAP13, PKN1, MAPK14, ZAK and MAP2K3. Within this complex, AKAP13 interacts directly with PKN1, which in turn recruits MAPK14, MAP2K3 and ZAK. Binds to a kinase interaction motif within the protein tyrosine phosphatase, PTPRR. This interaction retains MAPK14 in the cytoplasm and prevents nuclear accumulation. Interacts with SPAG9 and GADD45A. Interacts with CDC25B, CDC25C, DUSP1, DUSP10, DUSP16, NP60, SUPT20H and TAB1. Interacts with casein kinase II subunits CSNK2A1 and CSNK2B. Interacts with PPM1D. Interacts with CDK5RAP3; recruits PPM1D to MAPK14 and may regulate its dephosphorylation. Interacts with DUSP2; this interaction does not lead to catalytic activation of DUSP2 and dephosphrylation of MAPK14. Mg(2+) serves as cofactor. Post-translationally, dually phosphorylated on Thr-180 and Tyr-182 by the MAP2Ks MAP2K3/MKK3, MAP2K4/MKK4 and MAP2K6/MKK6 in response to inflammatory cytokines, environmental stress or growth factors, which activates the enzyme. Dual phosphorylation can also be mediated by TAB1-mediated autophosphorylation. TCR engagement in T-cells also leads to Tyr-323 phosphorylation by ZAP70. Dephosphorylated and inactivated by DUPS1, DUSP10 and DUSP16. PPM1D also mediates dephosphorylation and inactivation of MAPK14. Acetylated at Lys-53 and Lys-152 by KAT2B and EP300. Acetylation at Lys-53 increases the affinity for ATP and enhances kinase activity. Lys-53 and Lys-152 are deacetylated by HDAC3. In terms of processing, ubiquitinated. Ubiquitination leads to degradation by the proteasome pathway.

Its subcellular location is the cytoplasm. The protein localises to the nucleus. The catalysed reaction is L-seryl-[protein] + ATP = O-phospho-L-seryl-[protein] + ADP + H(+). It catalyses the reaction L-threonyl-[protein] + ATP = O-phospho-L-threonyl-[protein] + ADP + H(+). Activated by cell stresses such as DNA damage, heat shock, osmotic shock, anisomycin and sodium arsenite, as well as pro-inflammatory stimuli such as bacterial lipopolysaccharide (LPS) and interleukin-1. Activation occurs through dual phosphorylation of Thr-180 and Tyr-182 by either of two dual specificity kinases, MAP2K3/MKK3 or MAP2K6/MKK6, and potentially also MAP2K4/MKK4, as well as by TAB1-mediated autophosphorylation. MAPK14 phosphorylated on both Thr-180 and Tyr-182 is 10-20-fold more active than MAPK14 phosphorylated only on Thr-180, whereas MAPK14 phosphorylated on Tyr-182 alone is inactive. whereas Thr-180 is necessary for catalysis, Tyr-182 may be required for auto-activation and substrate recognition. Phosphorylated at Tyr-323 by ZAP70 in an alternative activation pathway in response to TCR signaling in T-cells. This alternative pathway is inhibited by GADD45A. Inhibited by dual specificity phosphatases, such as DUSP1, DUSP10, and DUSP16. Specifically inhibited by the binding of pyridinyl-imidazole compounds, which are cytokine-suppressive anti-inflammatory drugs (CSAID). SB203580 is an inhibitor of MAPK14. In terms of biological role, serine/threonine kinase which acts as an essential component of the MAP kinase signal transduction pathway. MAPK14 is one of the four p38 MAPKs which play an important role in the cascades of cellular responses evoked by extracellular stimuli such as pro-inflammatory cytokines or physical stress leading to direct activation of transcription factors. Accordingly, p38 MAPKs phosphorylate a broad range of proteins and it has been estimated that they may have approximately 200 to 300 substrates each. Some of the targets are downstream kinases which are activated through phosphorylation and further phosphorylate additional targets. RPS6KA5/MSK1 and RPS6KA4/MSK2 can directly phosphorylate and activate transcription factors such as CREB1, ATF1, the NF-kappa-B isoform RELA/NFKB3, STAT1 and STAT3, but can also phosphorylate histone H3 and the nucleosomal protein HMGN1. RPS6KA5/MSK1 and RPS6KA4/MSK2 play important roles in the rapid induction of immediate-early genes in response to stress or mitogenic stimuli, either by inducing chromatin remodeling or by recruiting the transcription machinery. On the other hand, two other kinase targets, MAPKAPK2/MK2 and MAPKAPK3/MK3, participate in the control of gene expression mostly at the post-transcriptional level, by phosphorylating ZFP36 (tristetraprolin) and ELAVL1, and by regulating EEF2K, which is important for the elongation of mRNA during translation. MKNK1/MNK1 and MKNK2/MNK2, two other kinases activated by p38 MAPKs, regulate protein synthesis by phosphorylating the initiation factor EIF4E2. MAPK14 also interacts with casein kinase II, leading to its activation through autophosphorylation and further phosphorylation of TP53/p53. In the cytoplasm, the p38 MAPK pathway is an important regulator of protein turnover. For example, CFLAR is an inhibitor of TNF-induced apoptosis whose proteasome-mediated degradation is regulated by p38 MAPK phosphorylation. In a similar way, MAPK14 phosphorylates the ubiquitin ligase SIAH2, regulating its activity towards EGLN3. MAPK14 may also inhibit the lysosomal degradation pathway of autophagy by interfering with the intracellular trafficking of the transmembrane protein ATG9. Another function of MAPK14 is to regulate the endocytosis of membrane receptors by different mechanisms that impinge on the small GTPase RAB5A. In addition, clathrin-mediated EGFR internalization induced by inflammatory cytokines and UV irradiation depends on MAPK14-mediated phosphorylation of EGFR itself as well as of RAB5A effectors. Ectodomain shedding of transmembrane proteins is regulated by p38 MAPKs as well. In response to inflammatory stimuli, p38 MAPKs phosphorylate the membrane-associated metalloprotease ADAM17. Such phosphorylation is required for ADAM17-mediated ectodomain shedding of TGF-alpha family ligands, which results in the activation of EGFR signaling and cell proliferation. Another p38 MAPK substrate is FGFR1. FGFR1 can be translocated from the extracellular space into the cytosol and nucleus of target cells, and regulates processes such as rRNA synthesis and cell growth. FGFR1 translocation requires p38 MAPK activation. In the nucleus, many transcription factors are phosphorylated and activated by p38 MAPKs in response to different stimuli. Classical examples include ATF1, ATF2, ATF6, ELK1, PTPRH, DDIT3, TP53/p53 and MEF2C and MEF2A. The p38 MAPKs are emerging as important modulators of gene expression by regulating chromatin modifiers and remodelers. The promoters of several genes involved in the inflammatory response, such as IL6, IL8 and IL12B, display a p38 MAPK-dependent enrichment of histone H3 phosphorylation on 'Ser-10' (H3S10ph) in LPS-stimulated myeloid cells. This phosphorylation enhances the accessibility of the cryptic NF-kappa-B-binding sites marking promoters for increased NF-kappa-B recruitment. Phosphorylates CDC25B and CDC25C which is required for binding to 14-3-3 proteins and leads to initiation of a G2 delay after ultraviolet radiation. Phosphorylates TIAR following DNA damage, releasing TIAR from GADD45A mRNA and preventing mRNA degradation. The p38 MAPKs may also have kinase-independent roles, which are thought to be due to the binding to targets in the absence of phosphorylation. Protein O-Glc-N-acylation catalyzed by the OGT is regulated by MAPK14, and, although OGT does not seem to be phosphorylated by MAPK14, their interaction increases upon MAPK14 activation induced by glucose deprivation. This interaction may regulate OGT activity by recruiting it to specific targets such as neurofilament H, stimulating its O-Glc-N-acylation. Required in mid-fetal development for the growth of embryo-derived blood vessels in the labyrinth layer of the placenta. Also plays an essential role in developmental and stress-induced erythropoiesis, through regulation of EPO gene expression. Phosphorylates S100A9 at 'Thr-113'. This chain is Mitogen-activated protein kinase 14, found in Rattus norvegicus (Rat).